Consider the following 572-residue polypeptide: Moesin/ezrin/radixin homolog 1 (572 aa).

Positions 1–291 constitute an FERM domain; that stretch reads MNVRVTTMDA…GNHELYMRRR (291 aa). The segment at 456–491 is disordered; that stretch reads TTTPSHHHVEEEEEMDNEEELVNGENGNQDFSKDFD. Residues 466-477 show a composition bias toward acidic residues; that stretch reads EEEEMDNEEELV. At threonine 553 the chain carries Phosphothreonine.

In terms of assembly, interacts with cytoskeletal actin.

It is found in the cell junction. The protein resides in the adherens junction. The protein localises to the cell projection. Its subcellular location is the microvillus. It localises to the rhabdomere. It is found in the cell membrane. The protein resides in the cytoplasm. The protein localises to the cytoskeleton. Involved in connections of major cytoskeletal structures to the plasma membrane. This chain is Moesin/ezrin/radixin homolog 1, found in Culex quinquefasciatus (Southern house mosquito).